The chain runs to 35 residues: Natriuretic peptide TNPb (35 aa).

An intrachain disulfide couples C9 to C25.

As to expression, expressed by the venom gland.

It localises to the secreted. In terms of biological role, snake venom natriuretic peptide that exhibits vasoactive and probable hypotensive activity. Is only weakly active on natriuretic peptide receptor-C (NPR3). Stimulates cGMP production through the natriuretic peptide receptor 1 (NPR1) with moderate potencies for the rat NPR1 (EC(50)=1200 nM), and very weak potencies over human NPR1 (30% activation at 10 uM). In vivo, does not impact systolic and diastolic blood pressure, as well as heart rate, when intravenously injected in conscious rabbits. Does not affect the bradycardia due to cardiac afferent stimulation (Bezold-Jarisch reflex). The sequence is that of Natriuretic peptide TNPb from Oxyuranus microlepidotus (Inland taipan).